Here is a 523-residue protein sequence, read N- to C-terminus: Transcription initiation factor TFIID subunit 4 (523 aa).

2 disordered regions span residues 1–100 and 185–241; these read MSLP…AASD and ASVE…VQGG. A compositionally biased stretch (low complexity) spans 58 to 77; that stretch reads QMQPPRQPIQQQMQHFQSPS. Residues 78 to 87 are compositionally biased toward pro residues; the sequence is PMAPQGPPGT. A TAFH domain is found at 101-199; sequence DKNVTKCVRF…VNPPPGYVFN (99 aa). Residues 204–213 are compositionally biased toward pro residues; sequence PGPPQPPPPQ. Residues 214–236 are compositionally biased toward low complexity; sequence QQSQQQPPLEMRQIPNPNQIPPQ. The segment at 329–383 is histone-fold; it reads LKPDEVLNRITKRMMSSCSVEEEALVAISDAVESHLRELITLMAGVAEHRVESLR. The segment at 333–382 is necessary and sufficient for interaction with oma-1; that stretch reads EVLNRITKRMMSSCSVEEEALVAISDAVESHLRELITLMAGVAEHRVESL. The tract at residues 407 to 435 is disordered; it reads QEEELRESREKESLIRMSKNKNSGKETIE.

This sequence belongs to the TAF4 family. As to quaternary structure, component of the TFIID basal transcription factor complex, composed of TATA-box-binding protein tbp-1, and a number of TBP-associated factors (TAFs). Interacts (via histone-fold domain) with oma-1 (via histone-fold domain). May also interact with oma-2. Interacts (via histone-fold domain) with taf-12 (via the histone-fold domain).

Its subcellular location is the nucleus. The protein resides in the cytoplasm. The TFIID basal transcription factor complex plays a major role in the initiation of RNA polymerase II (Pol II)-dependent transcription. TFIID recognizes and binds promoters via its subunit tbp-1, a TATA-box-binding protein, and promotes assembly of the pre-initiation complex (PIC). The TFIID complex consists of tbp-1 and TBP-associated factors (TAFs), including taf-4. Essential for early embryonic development, probably acting via activating transcription initiation by RNA polymerase II, as part of the TFIID complex. In early embryos, but not oocytes, remains, presumably inactive, in the cytoplasm as a result of binding to oma-1. Upon degradation of oma-1, taf-4 is released and bound by taf-12, and the taf-4/12 heterodimer translocates to the nucleus and transcriptional repression is relieved. Involved in lifespan extension in a manner dependent upon mitochondrial function. Plays a role in modulating polyribosome formation. The protein is Transcription initiation factor TFIID subunit 4 of Caenorhabditis elegans.